The following is a 432-amino-acid chain: Eukaryotic translation initiation factor 3 subunit E (432 aa).

The 181-residue stretch at 221 to 401 (VYYNYPKGRD…MGVKSVSIHE (181 aa)) folds into the PCI domain.

Belongs to the eIF-3 subunit E family. As to quaternary structure, component of the eukaryotic translation initiation factor 3 (eIF-3) complex.

The protein resides in the cytoplasm. Component of the eukaryotic translation initiation factor 3 (eIF-3) complex, which is involved in protein synthesis of a specialized repertoire of mRNAs and, together with other initiation factors, stimulates binding of mRNA and methionyl-tRNAi to the 40S ribosome. The eIF-3 complex specifically targets and initiates translation of a subset of mRNAs involved in cell proliferation. This Caenorhabditis elegans protein is Eukaryotic translation initiation factor 3 subunit E.